Here is a 371-residue protein sequence, read N- to C-terminus: Epoxyqueuosine reductase (371 aa).

Asp137 (proton donor) is an active-site residue. The 4Fe-4S ferredoxin-type domain occupies 179 to 211 (IPLPVDTPVENQCGKCTACISSCPTNAILENGV). The [4Fe-4S] cluster site is built by Cys191, Cys194, Cys197, Cys201, Cys217, Cys244, Cys247, and Cys251.

The protein belongs to the QueG family. As to quaternary structure, monomer. Requires cob(II)alamin as cofactor. [4Fe-4S] cluster is required as a cofactor.

It localises to the cytoplasm. The enzyme catalyses epoxyqueuosine(34) in tRNA + AH2 = queuosine(34) in tRNA + A + H2O. The protein operates within tRNA modification; tRNA-queuosine biosynthesis. Catalyzes the conversion of epoxyqueuosine (oQ) to queuosine (Q), which is a hypermodified base found in the wobble positions of tRNA(Asp), tRNA(Asn), tRNA(His) and tRNA(Tyr). This is Epoxyqueuosine reductase from Aliivibrio fischeri (strain ATCC 700601 / ES114) (Vibrio fischeri).